The primary structure comprises 47 residues: Large ribosomal subunit protein bL34 (47 aa).

It belongs to the bacterial ribosomal protein bL34 family.

In Mycobacterium tuberculosis (strain ATCC 25177 / H37Ra), this protein is Large ribosomal subunit protein bL34.